The following is a 473-amino-acid chain: Photosystem II CP43 reaction center protein (473 aa).

Positions 1-14 are excised as a propeptide; it reads MKILYSLRRFYHVE. Thr15 bears the N-acetylthreonine mark. Residue Thr15 is modified to Phosphothreonine. Helical transmembrane passes span 69-93, 134-155, 178-200, 255-275, and 291-312; these read LFEV…PHLA, LLGP…KDRN, KALY…RKIT, KPFA…LSYS, and WFNN…ASQA. A [CaMn4O5] cluster-binding site is contributed by Glu367. The helical transmembrane segment at 447 to 471 threads the bilayer; that stretch reads RARAAAAGFEKGIDRDLEPVLYMTP.

Belongs to the PsbB/PsbC family. PsbC subfamily. In terms of assembly, PSII is composed of 1 copy each of membrane proteins PsbA, PsbB, PsbC, PsbD, PsbE, PsbF, PsbH, PsbI, PsbJ, PsbK, PsbL, PsbM, PsbT, PsbX, PsbY, PsbZ, Psb30/Ycf12, at least 3 peripheral proteins of the oxygen-evolving complex and a large number of cofactors. It forms dimeric complexes. The cofactor is Binds multiple chlorophylls and provides some of the ligands for the Ca-4Mn-5O cluster of the oxygen-evolving complex. It may also provide a ligand for a Cl- that is required for oxygen evolution. PSII binds additional chlorophylls, carotenoids and specific lipids..

It localises to the plastid. The protein localises to the chloroplast thylakoid membrane. Its function is as follows. One of the components of the core complex of photosystem II (PSII). It binds chlorophyll and helps catalyze the primary light-induced photochemical processes of PSII. PSII is a light-driven water:plastoquinone oxidoreductase, using light energy to abstract electrons from H(2)O, generating O(2) and a proton gradient subsequently used for ATP formation. The protein is Photosystem II CP43 reaction center protein of Oryza nivara (Indian wild rice).